The following is a 506-amino-acid chain: Maturase K (506 aa).

The protein belongs to the intron maturase 2 family. MatK subfamily.

The protein resides in the plastid. Its subcellular location is the chloroplast. In terms of biological role, usually encoded in the trnK tRNA gene intron. Probably assists in splicing its own and other chloroplast group II introns. The chain is Maturase K from Phyllodoce caerulea (Blue mountain heath).